Consider the following 713-residue polypeptide: TWiK family of potassium channels protein 12 (713 aa).

At 1 to 15 the chain is on the cytoplasmic side; sequence MTLFKKIQWFCNLIR. A helical transmembrane segment spans residues 16 to 36; it reads LRSYYKFLLLIAYTAFGAWLF. N-linked (GlcNAc...) asparagine glycosylation is found at asparagine 53, asparagine 77, and asparagine 98. Positions 112-132 form an intramembrane region, pore-forming; it reads WTWTGAMFYAGQLYTTIGYGY. Residues 142–162 traverse the membrane as a helical segment; the sequence is ICTIFYALFGIPCFLMYLKIE. The Cytoplasmic portion of the chain corresponds to 163 to 242; sequence NAIEWKKDKQ…AEERKKKPFP (80 aa). Residues 243-263 form a helical membrane-spanning segment; that stretch reads IPIAIIMLIIWICFSASMFCI. The segment at residues 267–287 is an intramembrane region (pore-forming); it reads TWVFSSAVYFFIVSISTVGLG. A helical membrane pass occupies residues 298–318; the sequence is VFNFLLILVGLALLSMCFELI. Residues 319 to 713 are Cytoplasmic-facing; the sequence is TDRVAKWKQK…LSKRDASTMA (395 aa).

The protein belongs to the two pore domain potassium channel (TC 1.A.1.8) family.

The protein localises to the membrane. This chain is TWiK family of potassium channels protein 12 (twk-12), found in Caenorhabditis elegans.